The primary structure comprises 4085 residues: Replicase polyprotein 1a (4085 aa).

The 108-residue stretch at 2 to 109 folds into the CoV Nsp1 globular domain; sequence ACNRVTLAVA…EFDVVFGKRG (108 aa). Residues 113 to 359 enclose the CoV Nsp2 N-terminal domain; the sequence is VTYTDQYLCG…RNSVTDECRL (247 aa). Zn(2+) contacts are provided by C246, C248, C265, and C266. The segment at 246–266 is C4; sequence CTCGTKSWSVGDWTGFKSSCC. Residues 389 to 775 form the CoV Nsp2 middle domain; the sequence is YDDIFAESKP…LEAYNAFLDT (387 aa). The CoV Nsp2 C-terminal domain occupies 773–897; that stretch reads LDTVVSTVKI…LPVAFTKAAG (125 aa). The region spanning 898–993 is the Ubiquitin-like 1 domain; sequence GKVSFSDDVE…VMISEWPLSV (96 aa). The Peptidase C16 1 domain occupies 1016–1268; it reads VNSIFDIETV…DTTPKEEFVV (253 aa). C1054 functions as the For PL1-PRO activity in the catalytic mechanism. Residues 1126–1157 form a C4-type 1; degenerate zinc finger; the sequence is CSCTSGRLEESGAVLFCTPTKKAFPYGTCLNC. Residues H1205 and D1218 each act as for PL1-PRO activity in the active site. The 168-residue stretch at 1269–1436 folds into the Macro domain; the sequence is KEKLNAFLVH…KVKDFVSGLV (168 aa). The Ubiquitin-like 2 domain maps to 1600–1655; that stretch reads AKVITIKVTEDGVNVHDVTVTTDKSFEQQVGVIADKDKDLSGAVPSDLNTSELLTK. The Peptidase C16 2 domain maps to 1663 to 1914; the sequence is EFYGFKDAVT…TVKPKPVINQ (252 aa). The active-site For PL2-PRO activity is the C1701. Zn(2+) is bound by residues C1780, C1783, C1813, and H1815. The C4-type 2; atypical zinc-finger motif lies at 1780-1815; the sequence is CVECDAKFKNSVASINSAIVCASVKRDGVQVGYCVH. Catalysis depends on for PL2-PRO activity residues H1863 and D1868. The segment at 1925-2115 is HD1; sequence FGDFLIHNFV…STVGVFLGYK (191 aa). A helical transmembrane segment spans residues 1998–2018; the sequence is LLLLIYTLYSVVLLCVRFGPF. Residues 2005–2070 form the 3Ecto domain; that stretch reads LYSVVLLCVR…LDVVWKHITD (66 aa). Intrachain disulfides connect C2021/C2048 and C2039/C2045. 2 helical membrane-spanning segments follow: residues 2068–2088 and 2095–2115; these read ITDP…LLIF and CFLL…LGYK. A Y1 region spans residues 2144 to 2234; that stretch reads SFVRHVLFGC…ITKTNVQPTG (91 aa). The CoV Nsp3 Y domain occupies 2144–2483; the sequence is SFVRHVLFGC…PATSIVAKQG (340 aa). Positions 2148, 2153, 2158, 2161, 2194, 2197, 2201, and 2204 each coordinate Zn(2+). Positions 2148 to 2161 are ZF1; that stretch reads HVLFGCENPDCIAC. The tract at residues 2194 to 2204 is ZF2; the sequence is CKKHRFFCVDC. The tract at residues 2235 to 2324 is Y2; the sequence is PAYVMIDKVE…LVDSELLSTL (90 aa). The interval 2235 to 2483 is coV-Y; the sequence is PAYVMIDKVE…PATSIVAKQG (249 aa). Residues 2325–2381 are Y3; it reads SVDFNGVLHKAYIDVLRNSFGKDLNANMSLAECKRALGLSISDHEFTSAISNAHRCD. Residues 2382 to 2483 form a Y4 region; the sequence is VLLSDLSFNN…PATSIVAKQG (102 aa). 6 consecutive transmembrane segments (helical) span residues 2491–2511, 2731–2751, 2755–2775, 2782–2802, 2809–2829, and 2834–2854; these read LTWL…LCFF, LWNL…VAAM, ILLN…VTKF, LSVG…SYIV, MIAY…AWIW, and LIAY…LAML. The segment at 2491–2854 is HD2; sequence LTWLWLLCGL…LCAWYFLAML (364 aa). The Nsp4C domain maps to 2870–2965; the sequence is LFEGDKFVGT…PTVSYGSTLQ (96 aa). Residues 2966–3267 enclose the Peptidase C30 domain; it reads AGLRKMAQPS…VKQMFGVNLQ (302 aa). Residues H3006 and C3109 each act as for 3CL-PRO activity in the active site. A run of 7 helical transmembrane segments spans residues 3281–3301, 3304–3324, 3328–3348, 3367–3387, 3401–3421, 3422–3442, and 3467–3487; these read FAGF…TIWV, GFLT…TFVV, VLFL…QNCA, VMQM…VALL, CTYL…YDYV, SLLV…AIIF, and LLFY…LYWI. An HD3 region spans residues 3281–3487; sequence FAGFFVMFWA…CMYYGLLYWI (207 aa). The 83-residue stretch at 3547-3629 folds into the RdRp Nsp7 cofactor domain; that stretch reads SKLTDLKCTN…SYFENDSILQ (83 aa). In terms of domain architecture, RdRp Nsp8 cofactor spans 3630 to 3824; the sequence is SVASSFVGMP…LTCERVVKLQ (195 aa). Positions 3825-3933 constitute a Nsp9 ssRNA-binding domain; it reads NNEIMPGKMK…GYIGATVRLQ (109 aa). The ExoN/MTase coactivator domain occupies 3934–4072; it reads AGKQTEFVSN…DRTAIQSFDN (139 aa). Zn(2+) contacts are provided by C4007, C4010, H4016, C4023, C4049, C4052, C4060, and C4062. Zinc fingers lie at residues 4007–4023 and 4049–4062; these read CIYC…DGFC and CKVC…GCTC.

Belongs to the coronaviruses polyprotein 1ab family. In terms of assembly, 3CL-PRO exists as monomer and homodimer. Eight copies of nsp7 and eight copies of nsp8 assemble to form a heterohexadecamer. Nsp9 is a dimer. Nsp10 forms a dodecamer. Specific enzymatic cleavages in vivo by its own proteases yield mature proteins. 3CL-PRO and PL-PRO proteinases are autocatalytically processed.

It localises to the host membrane. Its subcellular location is the host cytoplasm. The protein resides in the host perinuclear region. The catalysed reaction is Thiol-dependent hydrolysis of ester, thioester, amide, peptide and isopeptide bonds formed by the C-terminal Gly of ubiquitin (a 76-residue protein attached to proteins as an intracellular targeting signal).. Its function is as follows. The papain-like proteinase 1 (PLP1) and papain-like proteinase 2 (PLP2) are responsible for the cleavages located at the N-terminus of the replicase polyprotein. In addition, PLP2 possesses a deubiquitinating/deISGylating activity and processes both 'Lys-48'- and 'Lys-63'-linked polyubiquitin chains from cellular substrates. PLP2 also antagonizes innate immune induction of type I interferon by blocking the nuclear translocation of host IRF-3. Responsible for the majority of cleavages as it cleaves the C-terminus of replicase polyprotein at 11 sites. Recognizes substrates containing the core sequence [ILMVF]-Q-|-[SGACN]. Inhibited by the substrate-analog Cbz-Val-Asn-Ser-Thr-Leu-Gln-CMK. Also contains an ADP-ribose-1''-phosphate (ADRP)-binding function. Functionally, nsp7-nsp8 hexadecamer may possibly confer processivity to the polymerase, maybe by binding to dsRNA or by producing primers utilized by the latter. In terms of biological role, nsp9 is a ssRNA-binding protein. The polypeptide is Replicase polyprotein 1a (Homo sapiens (Human)).